Reading from the N-terminus, the 134-residue chain is Phosphoribosyl-ATP pyrophosphatase (134 aa).

It belongs to the PRA-PH family.

Its subcellular location is the cytoplasm. The catalysed reaction is 1-(5-phospho-beta-D-ribosyl)-ATP + H2O = 1-(5-phospho-beta-D-ribosyl)-5'-AMP + diphosphate + H(+). Its pathway is amino-acid biosynthesis; L-histidine biosynthesis; L-histidine from 5-phospho-alpha-D-ribose 1-diphosphate: step 2/9. This Verminephrobacter eiseniae (strain EF01-2) protein is Phosphoribosyl-ATP pyrophosphatase.